A 213-amino-acid chain; its full sequence is tRNA (guanine-N(7)-)-methyltransferase (213 aa).

S-adenosyl-L-methionine is bound by residues E44, E69, N96, and D118. D118 is an active-site residue. K122 contacts substrate. An interaction with RNA region spans residues 124 to 129; it reads RHEKRR. Substrate-binding positions include D154 and 192–195; that span reads TEYE.

The protein belongs to the class I-like SAM-binding methyltransferase superfamily. TrmB family.

The catalysed reaction is guanosine(46) in tRNA + S-adenosyl-L-methionine = N(7)-methylguanosine(46) in tRNA + S-adenosyl-L-homocysteine. Its pathway is tRNA modification; N(7)-methylguanine-tRNA biosynthesis. Its function is as follows. Catalyzes the formation of N(7)-methylguanine at position 46 (m7G46) in tRNA. The chain is tRNA (guanine-N(7)-)-methyltransferase from Latilactobacillus sakei subsp. sakei (strain 23K) (Lactobacillus sakei subsp. sakei).